A 126-amino-acid chain; its full sequence is MASASAQPAALSAEQAKVVLAEVIQAFSAPENAVRMDEARDNACNDMGKMLQFVLPVATQIQQEVIKAYGFSCDGEGVLKFARLVKSYEAQDPEIASLSGKLKALFLPPMTLPPHGPASGSSVAAS.

Position 2 is an N-acetylalanine (Ala2).

The protein belongs to the UPF0456 family. In terms of tissue distribution, ubiquitously expressed, with higher expression in lung.

Its subcellular location is the cytoplasm. Its function is as follows. In brain, may be required for corpus callosum development. In Mus musculus (Mouse), this protein is Protein C10 (Grcc10).